The chain runs to 279 residues: 2-dehydro-3-deoxyphosphooctonate aldolase (279 aa).

This sequence belongs to the KdsA family.

Its subcellular location is the cytoplasm. It carries out the reaction D-arabinose 5-phosphate + phosphoenolpyruvate + H2O = 3-deoxy-alpha-D-manno-2-octulosonate-8-phosphate + phosphate. The protein operates within carbohydrate biosynthesis; 3-deoxy-D-manno-octulosonate biosynthesis; 3-deoxy-D-manno-octulosonate from D-ribulose 5-phosphate: step 2/3. Its pathway is bacterial outer membrane biogenesis; lipopolysaccharide biosynthesis. In Desulfosudis oleivorans (strain DSM 6200 / JCM 39069 / Hxd3) (Desulfococcus oleovorans), this protein is 2-dehydro-3-deoxyphosphooctonate aldolase.